A 414-amino-acid chain; its full sequence is MTTQHSPGLFRRLAHGSLVKQILAGLILGILLAWISKPAAEAVGLLGTLFVGALKAVAPILVLMLVMASIANHQHGQKTNIRPILFLYLLGTFSAALAAVIFSFAFPSTLHLSSSAGDISPPSGIVEVMRGLVMSMVSNPIDALLKGNYIGILVWAIGLGFALRHGNETTKNLVNDMSNAVTFMVKLVIHFAPIGIFGLVSSTLATTGFSTLWGYAQLLVVLVGCMLLVALVVNPLLVWWKIRRNPFPLVLLCLRESGVYAFFTRSSAANIPVNMALCEKLNLDRDTYSVSIPLGATINMAGAAITITVLTLAAVNTLGIPVDLPTALLLSVVASLCACGASGVAGGSLLLIPLACNMFGISNDIAMQVVAVGFIIGVLQDSCETALNSSTDVLFTAAACQAEDDRLANSALRN.

At 2 to 15 (TTQHSPGLFRRLAH) the chain is on the cytoplasmic side. A helical transmembrane segment spans residues 16-36 (GSLVKQILAGLILGILLAWIS). The Periplasmic portion of the chain corresponds to 37–45 (KPAAEAVGL). The chain crosses the membrane as a helical span at residues 46–66 (LGTLFVGALKAVAPILVLMLV). The Cytoplasmic portion of the chain corresponds to 67–83 (MASIANHQHGQKTNIRP). A helical membrane pass occupies residues 84-104 (ILFLYLLGTFSAALAAVIFSF). The Periplasmic segment spans residues 105 to 142 (AFPSTLHLSSSAGDISPPSGIVEVMRGLVMSMVSNPID). Residues 143-163 (ALLKGNYIGILVWAIGLGFAL) form a helical membrane-spanning segment. At 164–179 (RHGNETTKNLVNDMSN) the chain is on the cytoplasmic side. The chain crosses the membrane as a helical span at residues 180-200 (AVTFMVKLVIHFAPIGIFGLV). Residues 201–217 (SSTLATTGFSTLWGYAQ) lie on the Periplasmic side of the membrane. The helical transmembrane segment at 218-238 (LLVVLVGCMLLVALVVNPLLV) threads the bilayer. At 239–299 (WWKIRRNPFP…VSIPLGATIN (61 aa)) the chain is on the cytoplasmic side. Residues 300–320 (MAGAAITITVLTLAAVNTLGI) form a helical membrane-spanning segment. The Periplasmic segment spans residues 321-331 (PVDLPTALLLS). Residues 332 to 352 (VVASLCACGASGVAGGSLLLI) traverse the membrane as a helical segment. The Cytoplasmic segment spans residues 353–414 (PLACNMFGIS…DRLANSALRN (62 aa)).

Belongs to the dicarboxylate/amino acid:cation symporter (DAACS) (TC 2.A.23) family.

The protein resides in the cell inner membrane. The enzyme catalyses L-serine(in) + Na(+)(in) = L-serine(out) + Na(+)(out). It catalyses the reaction L-threonine(in) + Na(+)(in) = L-threonine(out) + Na(+)(out). Its function is as follows. Involved in the import of serine and threonine into the cell, with the concomitant import of sodium (symport system). The protein is Serine/threonine transporter SstT of Escherichia coli (strain UTI89 / UPEC).